A 64-amino-acid chain; its full sequence is Probable cytochrome c oxidase subunit 5C-1 (64 aa).

The chain crosses the membrane as a helical span at residues 15–34 (SVVKELFIGLALGLAAGGLW).

Belongs to the cytochrome c oxidase subunit 5C family.

The protein localises to the mitochondrion inner membrane. This protein is one of the nuclear-coded polypeptide chains of cytochrome c oxidase, the terminal oxidase in mitochondrial electron transport. This chain is Probable cytochrome c oxidase subunit 5C-1, found in Arabidopsis thaliana (Mouse-ear cress).